The following is a 295-amino-acid chain: Trimeric intracellular cation channel type A (295 aa).

The Lumenal portion of the chain corresponds to 1-18; it reads MELLSALSLGELALSFSR. Residues 19-39 traverse the membrane as a helical segment; sequence VPLFPVFDLSYFIVSILYLKY. The Cytoplasmic segment spans residues 40–51; that stretch reads EPGAVELSRRHP. The helical transmembrane segment at 52–72 threads the bilayer; that stretch reads VASWLCAMLHCFGSYILADLL. At 73–85 the chain is on the lumenal side; the sequence is LGEPLIDYFSNNS. Gly74 provides a ligand contact to Ca(2+). Residues 86–106 traverse the membrane as a helical segment; it reads SILLASAVWYLIFFCPLDLFY. Residues 107–144 are Cytoplasmic-facing; the sequence is KCVCFLPVKLIFVAMKEVVRVRKIAVGIHHAHHHYHHG. Residues Lys122 and Arg126 each coordinate a 1,2-diacyl-sn-glycero-3-phospho-(1D-myo-inositol-4,5-bisphosphate). Residues 145 to 165 traverse the membrane as a helical segment; sequence WFIMIATGWVKGSGVALLSNV. Residues 166 to 178 lie on the Lumenal side of the membrane; it reads EQLLRGVWKPETN. Residues 179 to 199 traverse the membrane as a helical segment; sequence EILHMSFPTKASLYGAILFTL. Topologically, residues 200 to 209 are cytoplasmic; sequence QQTRWLPVSK. Residues 210-230 form a helical membrane-spanning segment; sequence ASLIFIFTMFMVSCKVFLTAT. The Lumenal segment spans residues 231–234; that stretch reads HSHS. Residues 235–255 form a helical membrane-spanning segment; sequence SPFDVLEAYVCPVLFGTGSGG. Over 256–295 the chain is Cytoplasmic; the sequence is DHPQDNHGAWPGGPPSGALATKSKEELSEGSRKKKTKKAD. The tract at residues 256 to 295 is disordered; that stretch reads DHPQDNHGAWPGGPPSGALATKSKEELSEGSRKKKTKKAD. Positions 277–286 are enriched in basic and acidic residues; sequence KSKEELSEGS.

The protein belongs to the TMEM38 family. In terms of assembly, homotrimer; conformation seems to be controled by binding to diacylglycerol (DAG).

It localises to the sarcoplasmic reticulum membrane. Its subcellular location is the nucleus membrane. The enzyme catalyses K(+)(in) = K(+)(out). Channel activity is activated by a change of voltage within the sarcoplasmic reticulum lumen and blocked by luminal high Ca(2+) levels. In terms of biological role, intracellular monovalent cation channel required for maintenance of rapid intracellular calcium release. Acts as a potassium counter-ion channel that functions in synchronization with calcium release from intracellular stores. Opened by a change of voltage within the sarcoplasmic reticulum lumen. The sequence is that of Trimeric intracellular cation channel type A from Oryctolagus cuniculus (Rabbit).